Reading from the N-terminus, the 160-residue chain is SsrA-binding protein (160 aa).

The protein belongs to the SmpB family.

The protein resides in the cytoplasm. Required for rescue of stalled ribosomes mediated by trans-translation. Binds to transfer-messenger RNA (tmRNA), required for stable association of tmRNA with ribosomes. tmRNA and SmpB together mimic tRNA shape, replacing the anticodon stem-loop with SmpB. tmRNA is encoded by the ssrA gene; the 2 termini fold to resemble tRNA(Ala) and it encodes a 'tag peptide', a short internal open reading frame. During trans-translation Ala-aminoacylated tmRNA acts like a tRNA, entering the A-site of stalled ribosomes, displacing the stalled mRNA. The ribosome then switches to translate the ORF on the tmRNA; the nascent peptide is terminated with the 'tag peptide' encoded by the tmRNA and targeted for degradation. The ribosome is freed to recommence translation, which seems to be the essential function of trans-translation. This Nocardia farcinica (strain IFM 10152) protein is SsrA-binding protein.